A 140-amino-acid chain; its full sequence is Holo-[acyl-carrier-protein] synthase (140 aa).

Positions 8 and 62 each coordinate Mg(2+).

This sequence belongs to the P-Pant transferase superfamily. AcpS family. Mg(2+) serves as cofactor.

It is found in the cytoplasm. The catalysed reaction is apo-[ACP] + CoA = holo-[ACP] + adenosine 3',5'-bisphosphate + H(+). Functionally, transfers the 4'-phosphopantetheine moiety from coenzyme A to a Ser of acyl-carrier-protein. The polypeptide is Holo-[acyl-carrier-protein] synthase (Cupriavidus necator (strain ATCC 17699 / DSM 428 / KCTC 22496 / NCIMB 10442 / H16 / Stanier 337) (Ralstonia eutropha)).